Consider the following 111-residue polypeptide: Large ribosomal subunit protein uL22 (111 aa).

Belongs to the universal ribosomal protein uL22 family. In terms of assembly, part of the 50S ribosomal subunit.

This protein binds specifically to 23S rRNA; its binding is stimulated by other ribosomal proteins, e.g. L4, L17, and L20. It is important during the early stages of 50S assembly. It makes multiple contacts with different domains of the 23S rRNA in the assembled 50S subunit and ribosome. Functionally, the globular domain of the protein is located near the polypeptide exit tunnel on the outside of the subunit, while an extended beta-hairpin is found that lines the wall of the exit tunnel in the center of the 70S ribosome. The polypeptide is Large ribosomal subunit protein uL22 (Acidithiobacillus ferrooxidans (strain ATCC 23270 / DSM 14882 / CIP 104768 / NCIMB 8455) (Ferrobacillus ferrooxidans (strain ATCC 23270))).